A 252-amino-acid polypeptide reads, in one-letter code: Thiazole synthase (252 aa).

Lysine 98 functions as the Schiff-base intermediate with DXP in the catalytic mechanism. 1-deoxy-D-xylulose 5-phosphate is bound by residues glycine 159, 185–186, and 207–208; these read AG and AT.

It belongs to the ThiG family. In terms of assembly, homotetramer. Forms heterodimers with either ThiH or ThiS.

The protein resides in the cytoplasm. The enzyme catalyses [ThiS sulfur-carrier protein]-C-terminal-Gly-aminoethanethioate + 2-iminoacetate + 1-deoxy-D-xylulose 5-phosphate = [ThiS sulfur-carrier protein]-C-terminal Gly-Gly + 2-[(2R,5Z)-2-carboxy-4-methylthiazol-5(2H)-ylidene]ethyl phosphate + 2 H2O + H(+). Its pathway is cofactor biosynthesis; thiamine diphosphate biosynthesis. In terms of biological role, catalyzes the rearrangement of 1-deoxy-D-xylulose 5-phosphate (DXP) to produce the thiazole phosphate moiety of thiamine. Sulfur is provided by the thiocarboxylate moiety of the carrier protein ThiS. In vitro, sulfur can be provided by H(2)S. The polypeptide is Thiazole synthase (Mycobacterium avium (strain 104)).